Reading from the N-terminus, the 213-residue chain is dITP/XTP pyrophosphatase (213 aa).

A substrate-binding site is contributed by 7–12; sequence TSNLDK. The Proton acceptor role is filled by D74. D74 contributes to the Mg(2+) binding site. Substrate contacts are provided by residues S75, 165–168, K188, and 193–194; these read FGYD and HR.

The protein belongs to the HAM1 NTPase family. Homodimer. Mg(2+) is required as a cofactor.

The enzyme catalyses XTP + H2O = XMP + diphosphate + H(+). It catalyses the reaction dITP + H2O = dIMP + diphosphate + H(+). It carries out the reaction ITP + H2O = IMP + diphosphate + H(+). Pyrophosphatase that catalyzes the hydrolysis of nucleoside triphosphates to their monophosphate derivatives, with a high preference for the non-canonical purine nucleotides XTP (xanthosine triphosphate), dITP (deoxyinosine triphosphate) and ITP. Seems to function as a house-cleaning enzyme that removes non-canonical purine nucleotides from the nucleotide pool, thus preventing their incorporation into DNA/RNA and avoiding chromosomal lesions. This is dITP/XTP pyrophosphatase from Campylobacter concisus (strain 13826).